Consider the following 412-residue polypeptide: MIDNLQPLRGMKDLLPDDYQVHNYIINKARDVGVLYGYKQMSTPILEYTRVFNRCMGDSSDVISKEIYSFVDKSNNAIALRPEFTSGIIRSFISNGLHHKLPLKLFSTGPVFRYDRPQAGRQRQFHQLNYEYLGAKGAITDAETLKLAVDILKALEIEEDTTLELNSLGCSESRIVYQQKLVEYLNDFKDKLSGESKIRLNKNPMRILDSKSEIDQKIIANAPILSDYHTNESKKYFDELLKYLDILGIKYSINPRLVRGLDYYCHTVFEFTTQKLGSQATILAGGRYDMLSRIMGNYDVHAIGFAAGIERIALMKKYNIFVIKPVFVLPIGKNNICYALDIVDKLRLHNIISIIDPIGKIAKRIQRVLNEDAKFIIFVGDEEKMNNNLKFKDLKNQKEYIIDLEKVLELLK.

It belongs to the class-II aminoacyl-tRNA synthetase family. Homodimer.

The protein resides in the cytoplasm. The enzyme catalyses tRNA(His) + L-histidine + ATP = L-histidyl-tRNA(His) + AMP + diphosphate + H(+). The sequence is that of Histidine--tRNA ligase from Rickettsia typhi (strain ATCC VR-144 / Wilmington).